The chain runs to 264 residues: Thiazole synthase (264 aa).

Catalysis depends on K98, which acts as the Schiff-base intermediate with DXP. 1-deoxy-D-xylulose 5-phosphate is bound by residues G159, A185–G186, and A207–S208. The disordered stretch occupies residues H243–F264. Residues G253–F264 are compositionally biased toward basic and acidic residues.

Belongs to the ThiG family. As to quaternary structure, homotetramer. Forms heterodimers with either ThiH or ThiS.

It is found in the cytoplasm. The enzyme catalyses [ThiS sulfur-carrier protein]-C-terminal-Gly-aminoethanethioate + 2-iminoacetate + 1-deoxy-D-xylulose 5-phosphate = [ThiS sulfur-carrier protein]-C-terminal Gly-Gly + 2-[(2R,5Z)-2-carboxy-4-methylthiazol-5(2H)-ylidene]ethyl phosphate + 2 H2O + H(+). It participates in cofactor biosynthesis; thiamine diphosphate biosynthesis. Functionally, catalyzes the rearrangement of 1-deoxy-D-xylulose 5-phosphate (DXP) to produce the thiazole phosphate moiety of thiamine. Sulfur is provided by the thiocarboxylate moiety of the carrier protein ThiS. In vitro, sulfur can be provided by H(2)S. The sequence is that of Thiazole synthase from Streptomyces avermitilis (strain ATCC 31267 / DSM 46492 / JCM 5070 / NBRC 14893 / NCIMB 12804 / NRRL 8165 / MA-4680).